The chain runs to 685 residues: Glycine--tRNA ligase beta subunit (685 aa).

Belongs to the class-II aminoacyl-tRNA synthetase family. As to quaternary structure, tetramer of two alpha and two beta subunits.

The protein localises to the cytoplasm. The enzyme catalyses tRNA(Gly) + glycine + ATP = glycyl-tRNA(Gly) + AMP + diphosphate. This is Glycine--tRNA ligase beta subunit from Azotobacter vinelandii (strain DJ / ATCC BAA-1303).